Reading from the N-terminus, the 193-residue chain is Potassium-transporting ATPase KdpC subunit (193 aa).

Residues 7–27 traverse the membrane as a helical segment; the sequence is PLVVLFVILTAVTGLAYPAVM.

It belongs to the KdpC family. As to quaternary structure, the system is composed of three essential subunits: KdpA, KdpB and KdpC.

The protein resides in the cell inner membrane. Part of the high-affinity ATP-driven potassium transport (or Kdp) system, which catalyzes the hydrolysis of ATP coupled with the electrogenic transport of potassium into the cytoplasm. This subunit acts as a catalytic chaperone that increases the ATP-binding affinity of the ATP-hydrolyzing subunit KdpB by the formation of a transient KdpB/KdpC/ATP ternary complex. This is Potassium-transporting ATPase KdpC subunit from Burkholderia cenocepacia (strain ATCC BAA-245 / DSM 16553 / LMG 16656 / NCTC 13227 / J2315 / CF5610) (Burkholderia cepacia (strain J2315)).